Here is a 297-residue protein sequence, read N- to C-terminus: NAD(P)-dependent methylenetetrahydromethanopterin dehydrogenase (297 aa).

It to M.extorquens MtdA. In terms of assembly, homohexamer.

It is found in the cytoplasm. It catalyses the reaction 5,10-methylenetetrahydromethanopterin + NAD(+) = 5,10-methenyl-5,6,7,8-tetrahydromethanopterin + NADH. The catalysed reaction is 5,10-methylenetetrahydromethanopterin + NADP(+) = 5,10-methenyl-5,6,7,8-tetrahydromethanopterin + NADPH. It functions in the pathway one-carbon metabolism; formaldehyde degradation; formate from formaldehyde (H(4)MPT route): step 2/5. Functionally, catalyzes the dehydrogenation of methylene-H(4)MPT. The sequence is that of NAD(P)-dependent methylenetetrahydromethanopterin dehydrogenase (mtdB) from Methylorubrum extorquens (strain ATCC 14718 / DSM 1338 / JCM 2805 / NCIMB 9133 / AM1) (Methylobacterium extorquens).